Consider the following 810-residue polypeptide: Coiled-coil domain-containing protein 15 (810 aa).

Coiled coils occupy residues 65–89, 160–189, and 638–669; these read VVEE…RQVR, DGEN…SFKT, and MDIE…EQQR.

In terms of assembly, interacts with POC5, POC1B, CETN2 and FAM161A.

The protein resides in the cytoplasm. The protein localises to the cytoskeleton. Its subcellular location is the microtubule organizing center. It localises to the centrosome. It is found in the centriole. The protein resides in the centriolar satellite. Its function is as follows. Plays an important role in primary cilium assembly, maintenance, and length regulation. Interacts with centriole inner scaffold proteins to promote proper centriole size and integrity and assembly of functional cilia. Required for the recruitment of both the inner scaffold protein POC1B and the distal SFI1/CETN2 complex to centrioles. In Mus musculus (Mouse), this protein is Coiled-coil domain-containing protein 15 (Ccdc15).